Reading from the N-terminus, the 152-residue chain is Superoxide dismutase [Cu-Zn] 1 (152 aa).

Positions 45, 47, and 62 each coordinate Cu cation. A disulfide bridge connects residues cysteine 56 and cysteine 145. The Zn(2+) site is built by histidine 62, histidine 70, histidine 79, and aspartate 82. Histidine 119 contributes to the Cu cation binding site.

It belongs to the Cu-Zn superoxide dismutase family. In terms of assembly, homodimer. It depends on Cu cation as a cofactor. Zn(2+) serves as cofactor.

Its subcellular location is the cytoplasm. It catalyses the reaction 2 superoxide + 2 H(+) = H2O2 + O2. Its function is as follows. Destroys radicals which are normally produced within the cells and which are toxic to biological systems. The chain is Superoxide dismutase [Cu-Zn] 1 (SODCC.1) from Mesembryanthemum crystallinum (Common ice plant).